Here is a 370-residue protein sequence, read N- to C-terminus: Acyl-CoA:lysophosphatidylglycerol acyltransferase 1 (370 aa).

The helical transmembrane segment at 22–42 (FAFMVANNLVAIPSYICYVII) threads the bilayer. The short motif at 101–106 (HQATGD) is the HXXXXD motif element. Residues 342–362 (MWIFLIQSFAFLSGYLWYHII) form a helical membrane-spanning segment.

Belongs to the 1-acyl-sn-glycerol-3-phosphate acyltransferase family. In terms of tissue distribution, ubiquitous. Expressed in heart, kidney, liver, skin, intestine, and thymus. Highest expression is detected in brain and testis.

It localises to the endoplasmic reticulum membrane. It catalyses the reaction a 2-acyl-sn-glycero-3-phosphoethanolamine + octadecanoyl-CoA = 1-octadecanoyl-2-acyl-sn-glycero-3-phosphoethanolamine + CoA. The enzyme catalyses 2-(9Z-octadecenoyl)-sn-glycero-3-phosphoethanolamine + octadecanoyl-CoA = 1-octadecanoyl-2-(9Z-octadecenoyl)-sn-glycero-3-phosphoethanolamine + CoA. The catalysed reaction is a 2-acyl-sn-glycero-3-phosphoethanolamine + hexadecanoyl-CoA = 1-hexadecanoyl-2-acyl-sn-glycero-3-phosphoethanolamine + CoA. It carries out the reaction 2-(9Z-octadecenoyl)-sn-glycero-3-phosphoethanolamine + hexadecanoyl-CoA = 1-hexadecanoyl-2-(9Z-octadecenoyl)-sn-glycero-3-phosphoethanolamine + CoA. It catalyses the reaction 1-tetradecanoyl-sn-glycero-3-phospho-(1'-sn-glycerol) + hexadecanoyl-CoA = 1-tetradecanoyl-2-hexadecanoyl-sn-glycero-3-phospho-(1'-sn-glycerol) + CoA. The enzyme catalyses 1-hexadecanoyl-sn-glycero-3-phospho-(1'-sn-glycerol) + dodecanoyl-CoA = 1-hexadecanoyl-2-dodecanoyl-sn-glycero-3-phospho-(1'-sn-glycerol) + CoA. The catalysed reaction is 1-hexadecanoyl-sn-glycero-3-phospho-(1'-sn-glycerol) + hexadecanoyl-CoA = 1,2-dihexadecanoyl-sn-glycero-3-phospho-(1'-sn-glycerol) + CoA. It carries out the reaction 1-hexadecanoyl-sn-glycero-3-phospho-(1'-sn-glycerol) + octadecanoyl-CoA = 1-hexadecanoyl-2-octadecanoyl-sn-glycero-3-phospho-(1'-sn-glycerol) + CoA. It catalyses the reaction 1-octadecanoyl-sn-glycero-3-phospho-(1'-sn-glycerol) + hexadecanoyl-CoA = 1-octadecanoyl-2-hexadecanoyl-sn-glycero-3-phospho-(1'-sn-glycerol) + CoA. The enzyme catalyses 1-(9Z-octadecenoyl)-sn-glycero-3-phospho-(1'-sn-glycerol) + dodecanoyl-CoA = 1-(9Z-octadecenoyl)-2-dodecanoyl-sn-glycero-3-phospho-(1'-sn-glycerol) + CoA. The catalysed reaction is 1-hexadecanoyl-sn-glycero-3-phospho-(1'-sn-glycerol) + (9Z)-octadecenoyl-CoA = 1-hexadecanoyl-2-(9Z-octadecenoyl)-sn-glycero-3-phospho-(1'-sn-glycerol) + CoA. It carries out the reaction 1-(9Z-octadecenoyl)-sn-glycero-3-phospho-(1'-sn-glycerol) + hexadecanoyl-CoA = 1-(9Z-octadecenoyl)-2-hexadecanoyl-sn-glycero-3-phospho-(1'-sn-glycerol) + CoA. It catalyses the reaction 1-(9Z-octadecenoyl)-sn-glycero-3-phospho-(1'-sn-glycerol) + (9Z)-octadecenoyl-CoA = 1,2-di-(9Z-octadecenoyl)-sn-glycero-3-phospho-(1'-sn-glycerol) + CoA. The enzyme catalyses a 2-acylglycerol + an acyl-CoA = a 1,2-diacylglycerol + CoA. The catalysed reaction is a 2-acylglycerol + hexadecanoyl-CoA = a 1-hexadecanoyl-2-acylglycerol + CoA. It carries out the reaction a 1-acylglycerol + hexadecanoyl-CoA = an hexadecanoyl-acylglycerol + CoA. It catalyses the reaction a 2-acyl-sn-glycero-3-phosphocholine + an acyl-CoA = a 1,2-diacyl-sn-glycero-3-phosphocholine + CoA. The enzyme catalyses 2-(9Z-octadecenoyl)-sn-glycero-3-phosphocholine + octadecanoyl-CoA = 1-octadecanoyl-2-(9Z-octadecenoyl)-sn-glycero-3-phosphocholine + CoA. The catalysed reaction is 2-(9Z,12Z-octadecadienoyl)-sn-glycero-3-phosphocholine + octadecanoyl-CoA = 1-octadecanoyl-2-(9Z,12Z)-octadecadienoyl-sn-glycero-3-phosphocholine + CoA. It carries out the reaction 2-(5Z,8Z,11Z,14Z)-eicosatetraenoyl-sn-glycero-3-phosphocholine + octadecanoyl-CoA = 1-octadecanoyl-2-(5Z,8Z,11Z,14Z-eicosatetraenoyl)-sn-glycero-3-phosphocholine + CoA. It catalyses the reaction 2-(9Z-octadecenoyl)-sn-glycero-3-phosphocholine + hexadecanoyl-CoA = 1-hexadecanoyl-2-(9Z-octadecenoyl)-sn-glycero-3-phosphocholine + CoA. The enzyme catalyses 2-(9Z-octadecenoyl)-sn-glycero-3-phospho-L-serine + hexadecanoyl-CoA = 1-hexadecanoyl-2-(9Z-octadecenoyl)-sn-glycero-3-phospho-L-serine + CoA. The catalysed reaction is 2-(4Z,7Z,10Z,13Z,16Z,19Z-docosahexaenoyl)-sn-glycero-3-phosphocholine + octadecanoyl-CoA = 1-octadecanoyl-2-(4Z,7Z,10Z,13Z,16Z,19Z-docosahexaenoyl)-sn-glycero-3-phosphocholine + CoA. It carries out the reaction 1-(9Z-octadecenoyl)-sn-glycero-3-phospho-L-serine + octadecanoyl-CoA = 1-(9Z-octadecenoyl)-2-octadecanoyl-sn-glycero-3-phospho-L-serine + CoA. It catalyses the reaction a 2-acyl-sn-glycero-3-phosphoethanolamine + a fatty acyl-CoA = a 1,2-diacyl-sn-glycero-3-phosphoethanolamine + CoA. In terms of biological role, lysophospholipid acyltransferase involved in fatty acyl chain remodeling of glycerophospholipids in the endoplasmic reticulum membrane. Selectively catalyzes the transfer and esterification of saturated long-chain fatty acids from acyl-CoA to the sn-1 position of 1-lyso-2-acyl phosphatidylethanolamines (1-lyso-PE, LPE), with a preference for stearoyl CoA over palmitoyl CoA as acyl donor. Acts in concert with an unknown phospholipase A1 to convert palmitate PE species into stearate ones. Provides substrates to the PE methylation pathway, controlling stearate/palmitate composition of PE and phosphatidylcholine (PC) species with an overall impact on de novo hepatic lipid synthesis, body fat content and life span. Can acylate lysophosphatidylglycerols (LPG) using various saturated fatty acyl-CoAs as acyl donors. Can also acylate monoacylglycerols with a preference for 2-monoacylglycerols over 1-monoacylglycerols. Has no activity toward lysophosphatidic acids (LPA) and lysophosphatidylcholines (LPC). In Mus musculus (Mouse), this protein is Acyl-CoA:lysophosphatidylglycerol acyltransferase 1.